The sequence spans 912 residues: Intercellular adhesion molecule 5 (912 aa).

Residues 1–29 (MPGPSPGLRALLGFWVALGLGILRLSAVA) form the signal peptide. Residues 30–826 (QEPFWADLQP…RITVRVAGPW (797 aa)) lie on the Extracellular side of the membrane. Ig-like C2-type domains lie at 47 to 127 (GGSL…PLPP), 132 to 232 (GENF…RLLA), 239 to 324 (DSQS…LLTL), 332 to 395 (GKLV…NGSA), 403 to 481 (PRLD…VTLT), 486 to 561 (PALD…VAVT), 566 to 645 (PSFE…NPLG), 659 to 734 (PQMD…TVGV), and 738 to 819 (PVVA…RRIT). Asn-53 carries an N-linked (GlcNAc...) (high mannose) asparagine glycan. Cystine bridges form between Cys-54–Cys-97 and Cys-58–Cys-101. An N-linked (GlcNAc...) asparagine glycan is attached at Asn-134. The cysteines at positions 139 and 195 are disulfide-linked. Phosphothreonine occurs at positions 179 and 181. 2 N-linked (GlcNAc...) asparagine glycosylation sites follow: Asn-192 and Asn-211. Cys-246 and Cys-297 are disulfide-bonded. Asn-311, Asn-366, and Asn-392 each carry an N-linked (GlcNAc...) asparagine glycan. Cys-339 and Cys-378 are joined by a disulfide. 3 cysteine pairs are disulfide-bonded: Cys-410–Cys-465, Cys-493–Cys-546, and Cys-573–Cys-638. Residues Asn-576 and Asn-639 are each glycosylated (N-linked (GlcNAc...) asparagine). The cysteines at positions 666 and 717 are disulfide-linked. The disordered stretch occupies residues 678-708 (AAGPACARGRPSPRVRCSREGAPRPARPRVS). N-linked (GlcNAc...) asparagine glycosylation is found at Asn-756, Asn-787, and Asn-788. An intrachain disulfide couples Cys-761 to Cys-806. A helical transmembrane segment spans residues 827–847 (LWIAVGGAVGGAVLLAAGAGL). Residues 848–912 (AFYVQSTACK…EVFAIQLTSA (65 aa)) lie on the Cytoplasmic side of the membrane. The segment at 880–902 (GGAGSGAEGGPEAEDSAESPAGG) is disordered.

The protein belongs to the immunoglobulin superfamily. ICAM family. Post-translationally, glycosylation at Asn-53 is critical for functional folding. In terms of tissue distribution, expressed on neurons in the most rostral segment of the mammalian brain, the telencephalon.

The protein resides in the membrane. ICAM proteins are ligands for the leukocyte adhesion protein LFA-1 (integrin alpha-L/beta-2). This Oryctolagus cuniculus (Rabbit) protein is Intercellular adhesion molecule 5 (ICAM5).